A 1150-amino-acid chain; its full sequence is Alpha-mannosidase 2 (1150 aa).

Residues 1–5 lie on the Cytoplasmic side of the membrane; the sequence is MKLSR. The chain crosses the membrane as a helical; Signal-anchor for type II membrane protein span at residues 6 to 26; it reads QFTVFGSAIFCVVIFSLYLML. Over 27 to 1150 the chain is Lumenal; sequence DRGHLDYPRG…STFRIRLRWT (1124 aa). N78 is a glycosylation site (N-linked (GlcNAc...) asparagine). S80 and S82 each carry phosphoserine. N93 carries N-linked (GlcNAc...) asparagine glycosylation. Positions 174, 176, 288, and 568 each coordinate Zn(2+). The active-site Nucleophile is the D288. N-linked (GlcNAc...) asparagine glycosylation is present at N1129.

Belongs to the glycosyl hydrolase 38 family. In terms of assembly, homodimer; disulfide-linked. Zn(2+) is required as a cofactor. In terms of processing, glycosylated. As to expression, all tissues, mostly in adrenal and thymus.

The protein resides in the golgi apparatus membrane. It carries out the reaction N(4)-{beta-D-GlcNAc-(1-&gt;2)-alpha-D-Man-(1-&gt;3)-[alpha-D-Man-(1-&gt;3)-[alpha-D-Man-(1-&gt;6)]-alpha-D-Man-(1-&gt;6)]-beta-D-Man-(1-&gt;4)-beta-D-GlcNAc-(1-&gt;4)-beta-D-GlcNAc}-L-asparaginyl-[protein] + 2 H2O = 2 alpha-D-mannopyranose + an N(4)-{beta-D-GlcNAc-(1-&gt;2)-alpha-D-Man-(1-&gt;3)-[alpha-D-Man-(1-&gt;6)]-beta-D-Man-(1-&gt;4)-beta-D-GlcNAc-(1-&gt;4)-beta-D-GlcNAc}-L-asparaginyl-[protein]. It functions in the pathway protein modification; protein glycosylation. Catalyzes the first committed step in the biosynthesis of complex N-glycans. It controls conversion of high mannose to complex N-glycans; the final hydrolytic step in the N-glycan maturation pathway. The sequence is that of Alpha-mannosidase 2 (Man2a1) from Mus musculus (Mouse).